Consider the following 736-residue polypeptide: Probable potassium transport system protein Kup 2 (736 aa).

A run of 12 helical transmembrane segments spans residues 1–21, 42–62, 84–104, 126–146, 156–176, 204–224, 239–259, 287–307, 334–354, 364–384, 390–410, and 414–434; these read MAIV…LYTA, MLSL…VLIA, GAWL…DSVL, LFDE…VILF, IGKV…IVGV, AAGI…EALY, WPFI…WMLA, AVIL…TGAF, LYIP…LAIF, YGLA…VYLW, VGAI…FIAS, and FLHG…VMYT. Disordered stretches follow at residues 649 to 678 and 693 to 736; these read TDTA…DTTS and AEAR…KQKR. 2 stretches are compositionally biased toward low complexity: residues 660-677 and 700-709; these read PTRA…MDTT and EAAAADAPAE. Over residues 710–721 the composition is skewed to basic and acidic residues; the sequence is QGDKGDKGKAEN.

Belongs to the HAK/KUP transporter (TC 2.A.72) family.

The protein localises to the cell membrane. It catalyses the reaction K(+)(in) + H(+)(in) = K(+)(out) + H(+)(out). Functionally, transport of potassium into the cell. Likely operates as a K(+):H(+) symporter. The polypeptide is Probable potassium transport system protein Kup 2 (Bifidobacterium longum (strain NCC 2705)).